A 341-amino-acid chain; its full sequence is Glycerol-3-phosphate dehydrogenase [NAD(P)+] (341 aa).

Positions 14, 15, 35, and 108 each coordinate NADPH. The sn-glycerol 3-phosphate site is built by Lys-108 and Gly-136. Ala-140 serves as a coordination point for NADPH. Lys-191, Asp-244, Ser-254, Arg-255, and Asn-256 together coordinate sn-glycerol 3-phosphate. Lys-191 (proton acceptor) is an active-site residue. Position 255 (Arg-255) interacts with NADPH. Val-279 and Glu-281 together coordinate NADPH.

The protein belongs to the NAD-dependent glycerol-3-phosphate dehydrogenase family.

Its subcellular location is the cytoplasm. It carries out the reaction sn-glycerol 3-phosphate + NAD(+) = dihydroxyacetone phosphate + NADH + H(+). The enzyme catalyses sn-glycerol 3-phosphate + NADP(+) = dihydroxyacetone phosphate + NADPH + H(+). The protein operates within membrane lipid metabolism; glycerophospholipid metabolism. Catalyzes the reduction of the glycolytic intermediate dihydroxyacetone phosphate (DHAP) to sn-glycerol 3-phosphate (G3P), the key precursor for phospholipid synthesis. This is Glycerol-3-phosphate dehydrogenase [NAD(P)+] from Pseudomonas syringae pv. syringae (strain B728a).